Here is a 337-residue protein sequence, read N- to C-terminus: L-Ala-D/L-amino acid epimerase (337 aa).

Substrate-binding positions include threonine 129 and lysine 151 to lysine 153. Positions 177, 203, and 228 each coordinate Mg(2+). Substrate-binding positions include lysine 250 and aspartate 300–aspartate 302.

The protein belongs to the mandelate racemase/muconate lactonizing enzyme family. Mg(2+) serves as cofactor.

Broad specificity dipeptide epimerase. Catalyzes the epimerization of L-Ala-L-Ala, L-Ala-L-Glu, L-Ala-L-Ser, L-Ala-L-Thr and L-Ala-L-Met (in vitro). This Maribacter sp. (strain HTCC2170 / KCCM 42371) protein is L-Ala-D/L-amino acid epimerase.